The following is a 134-amino-acid chain: U35-theraphotoxin-Cg1a (134 aa).

The N-terminal stretch at 1–18 (MLVTLLETFSVVFQVANG) is a signal peptide. Positions 19-56 (DGNCVPRFQDDVEFCDNYILEAVTEASKMIAPRAREQK) are excised as a propeptide.

Expressed by the venom gland.

The protein resides in the secreted. Probable secreted venom toxin. In Chilobrachys guangxiensis (Chinese earth tiger tarantula), this protein is U35-theraphotoxin-Cg1a.